The primary structure comprises 355 residues: 3-dehydroquinate synthase (355 aa).

NAD(+) is bound by residues 98 to 102, 122 to 123, K135, K144, and 162 to 165; these read GVIGD, TT, and TLNT. Positions 177, 240, and 257 each coordinate Zn(2+).

Belongs to the sugar phosphate cyclases superfamily. Dehydroquinate synthase family. It depends on Co(2+) as a cofactor. Zn(2+) serves as cofactor. The cofactor is NAD(+).

The protein resides in the cytoplasm. The catalysed reaction is 7-phospho-2-dehydro-3-deoxy-D-arabino-heptonate = 3-dehydroquinate + phosphate. It functions in the pathway metabolic intermediate biosynthesis; chorismate biosynthesis; chorismate from D-erythrose 4-phosphate and phosphoenolpyruvate: step 2/7. Catalyzes the conversion of 3-deoxy-D-arabino-heptulosonate 7-phosphate (DAHP) to dehydroquinate (DHQ). The chain is 3-dehydroquinate synthase from Dictyoglomus thermophilum (strain ATCC 35947 / DSM 3960 / H-6-12).